A 1574-amino-acid chain; its full sequence is DNA-directed RNA polymerase subunit beta' (1574 aa).

Zn(2+) is bound by residues cysteine 64, cysteine 66, cysteine 79, and cysteine 82. Residues aspartate 590, aspartate 592, and aspartate 594 each coordinate Mg(2+). Residues cysteine 928, cysteine 1002, cysteine 1009, and cysteine 1012 each contribute to the Zn(2+) site.

Belongs to the RNA polymerase beta' chain family. As to quaternary structure, the RNAP catalytic core consists of 2 alpha, 1 beta, 1 beta' and 1 omega subunit. When a sigma factor is associated with the core the holoenzyme is formed, which can initiate transcription. Mg(2+) is required as a cofactor. Requires Zn(2+) as cofactor.

The catalysed reaction is RNA(n) + a ribonucleoside 5'-triphosphate = RNA(n+1) + diphosphate. Functionally, DNA-dependent RNA polymerase catalyzes the transcription of DNA into RNA using the four ribonucleoside triphosphates as substrates. This is DNA-directed RNA polymerase subunit beta' from Aquifex aeolicus (strain VF5).